A 383-amino-acid polypeptide reads, in one-letter code: MTAPAELSPTLQLACDLIRRPSVTPVDADCQTQMMNRLGAVGFQLEPMRFEDVDNFWATHGTQDGPVLCFAGHTDVVPTGPVQQWQHEPFEALIDADGMLCGRGAADMKGSLASMVVASERFVQDYPNHRGKVAFLITSDEEGPAHHGTKAVVELLKARNERLDWCIVGEPSSTTLLGDVVKNGRRGSLGAKLTVRGKQGHVAYPHLARNPIHLAAPALAELAAEHWDEGNAFFPPTSFQISNLNSGTGATNVVPGDLTALFNFRFSTESTVEGLQERVAAILDKHQLEWSIDWALSGLPFLTEPGELLDAVSSSIKAVTGRETQPSTSGGTSDGRFIATMGTQVVELGPVNATIHQVDERILASDLDLLTEIYYQTLVRLLA.

Zn(2+) is bound at residue histidine 73. Aspartate 75 is a catalytic residue. Residue aspartate 107 participates in Zn(2+) binding. Glutamate 141 serves as the catalytic Proton acceptor. The Zn(2+) site is built by glutamate 142, glutamate 170, and histidine 356.

The protein belongs to the peptidase M20A family. DapE subfamily. Homodimer. Zn(2+) is required as a cofactor. Requires Co(2+) as cofactor.

It catalyses the reaction N-succinyl-(2S,6S)-2,6-diaminopimelate + H2O = (2S,6S)-2,6-diaminopimelate + succinate. Its pathway is amino-acid biosynthesis; L-lysine biosynthesis via DAP pathway; LL-2,6-diaminopimelate from (S)-tetrahydrodipicolinate (succinylase route): step 3/3. Its function is as follows. Catalyzes the hydrolysis of N-succinyl-L,L-diaminopimelic acid (SDAP), forming succinate and LL-2,6-diaminopimelate (DAP), an intermediate involved in the bacterial biosynthesis of lysine and meso-diaminopimelic acid, an essential component of bacterial cell walls. The polypeptide is Succinyl-diaminopimelate desuccinylase (Pseudomonas entomophila (strain L48)).